A 254-amino-acid chain; its full sequence is MNPIAFHVGNLAIRWYGVIISMGTALGLLLAMYNCKIREASYDEFINMFLIAFPSAIIGARLYYVIFEFEDYRDNLINIFNTRQGGLAIHGGIIFGVLAVYIYLKYRKESFFEYVDVAAPSIILGQAIGRWGNFFNSEAHGGPVTKEFISKFPQFIQNGMFIEGTYYHPTFLYESIWNFIICIFLVYLLKKTKKKGIVFMAYIGLYSLGRFFIEGLRTDSLYLGSIRVAQLISVLGIILSIFFIYNIIKKEKRY.

Helical transmembrane passes span 11–31 (LAIR…LLLA), 49–69 (FLIA…IFEF), 84–104 (QGGL…YIYL), and 109–129 (ESFF…QAIG). Residue R130 coordinates a 1,2-diacyl-sn-glycero-3-phospho-(1'-sn-glycerol). 3 helical membrane-spanning segments follow: residues 169 to 189 (PTFL…VYLL), 196 to 216 (GIVF…IEGL), and 228 to 248 (VAQL…YNII).

It belongs to the Lgt family.

The protein resides in the cell membrane. The catalysed reaction is L-cysteinyl-[prolipoprotein] + a 1,2-diacyl-sn-glycero-3-phospho-(1'-sn-glycerol) = an S-1,2-diacyl-sn-glyceryl-L-cysteinyl-[prolipoprotein] + sn-glycerol 1-phosphate + H(+). It functions in the pathway protein modification; lipoprotein biosynthesis (diacylglyceryl transfer). In terms of biological role, catalyzes the transfer of the diacylglyceryl group from phosphatidylglycerol to the sulfhydryl group of the N-terminal cysteine of a prolipoprotein, the first step in the formation of mature lipoproteins. This Clostridium botulinum (strain ATCC 19397 / Type A) protein is Phosphatidylglycerol--prolipoprotein diacylglyceryl transferase.